The chain runs to 416 residues: Queuine tRNA-ribosyltransferase accessory subunit 2 (416 aa).

Residues Cys-323, Cys-325, Cys-328, and His-354 each coordinate Zn(2+).

It belongs to the queuine tRNA-ribosyltransferase family. QTRT2 subfamily. As to quaternary structure, heterodimer of a catalytic subunit and an accessory subunit. Zn(2+) serves as cofactor.

The protein resides in the cytoplasm. Its function is as follows. Non-catalytic subunit of the queuine tRNA-ribosyltransferase (TGT) that catalyzes the base-exchange of a guanine (G) residue with queuine (Q) at position 34 (anticodon wobble position) in tRNAs with GU(N) anticodons (tRNA-Asp, -Asn, -His and -Tyr), resulting in the hypermodified nucleoside queuosine (7-(((4,5-cis-dihydroxy-2-cyclopenten-1-yl)amino)methyl)-7-deazaguanosine). This chain is Queuine tRNA-ribosyltransferase accessory subunit 2, found in Drosophila mojavensis (Fruit fly).